The sequence spans 118 residues: Ribosome-binding factor A (118 aa).

Belongs to the RbfA family. As to quaternary structure, monomer. Binds 30S ribosomal subunits, but not 50S ribosomal subunits or 70S ribosomes.

It is found in the cytoplasm. Its function is as follows. One of several proteins that assist in the late maturation steps of the functional core of the 30S ribosomal subunit. Associates with free 30S ribosomal subunits (but not with 30S subunits that are part of 70S ribosomes or polysomes). Required for efficient processing of 16S rRNA. May interact with the 5'-terminal helix region of 16S rRNA. The sequence is that of Ribosome-binding factor A from Bacillus anthracis (strain A0248).